The sequence spans 193 residues: Ion-translocating oxidoreductase complex subunit A (193 aa).

Helical transmembrane passes span 5 to 25 (ALLF…FLGL), 39 to 59 (IGMG…SWLV), 62 to 82 (FILV…LVLA), 102 to 122 (LLGI…VVLL), 134 to 154 (TIYG…FAAI), and 171 to 191 (SIAL…TGLV).

The protein belongs to the NqrDE/RnfAE family. The complex is composed of six subunits: RnfA, RnfB, RnfC, RnfD, RnfE and RnfG.

It localises to the cell inner membrane. In terms of biological role, part of a membrane-bound complex that couples electron transfer with translocation of ions across the membrane. The chain is Ion-translocating oxidoreductase complex subunit A from Pectobacterium carotovorum subsp. carotovorum (strain PC1).